The sequence spans 240 residues: Lactate utilization protein C (240 aa).

It belongs to the LutC/YkgG family.

Its function is as follows. Is involved in L-lactate degradation and allows cells to grow with lactate as the sole carbon source. This is Lactate utilization protein C from Bacillus pumilus (strain SAFR-032).